We begin with the raw amino-acid sequence, 166 residues long: Sec-independent protein translocase protein TatB (166 aa).

Residues 2–22 traverse the membrane as a helical segment; the sequence is FNDIGALELLTLGVLAVLVFG. The tract at residues 110–166 is disordered; that stretch reads TPAASDTANSAVNGSAGAAADGVTTSLTKTGETTPDLLKKAPQQAQPERPPFDADAT. Residues 117-129 show a composition bias toward low complexity; that stretch reads ANSAVNGSAGAAA. Residues 132 to 142 are compositionally biased toward polar residues; that stretch reads VTTSLTKTGET.

Belongs to the TatB family. In terms of assembly, the Tat system comprises two distinct complexes: a TatABC complex, containing multiple copies of TatA, TatB and TatC subunits, and a separate TatA complex, containing only TatA subunits. Substrates initially bind to the TatABC complex, which probably triggers association of the separate TatA complex to form the active translocon.

Its subcellular location is the cell membrane. In terms of biological role, part of the twin-arginine translocation (Tat) system that transports large folded proteins containing a characteristic twin-arginine motif in their signal peptide across membranes. Together with TatC, TatB is part of a receptor directly interacting with Tat signal peptides. TatB may form an oligomeric binding site that transiently accommodates folded Tat precursor proteins before their translocation. This chain is Sec-independent protein translocase protein TatB, found in Streptomyces griseus subsp. griseus (strain JCM 4626 / CBS 651.72 / NBRC 13350 / KCC S-0626 / ISP 5235).